The chain runs to 20 residues: Hemoglobinase-like protein 1 (20 aa).

Belongs to the peptidase C13 family.

It carries out the reaction Hydrolysis of proteins and small molecule substrates at -Asn-|-Xaa- bonds.. The chain is Hemoglobinase-like protein 1 from Fasciola hepatica (Liver fluke).